A 145-amino-acid chain; its full sequence is MRLHLITVGEPKLTYARLGWEEYEKRLRRYHKLQVTRVSGRTQAQESEAVRRAAGKAPLVLLDPRGRQFSSPDLSAYLDAQAVGGVGELAFAIGGPDGHTDELRSSAHLLWGLGQLTLPHDLAMVVLVEALYRASTISAGEPYHR.

Residues L62, G94, and 113 to 118 (LGQLTL) each bind S-adenosyl-L-methionine.

It belongs to the RNA methyltransferase RlmH family. As to quaternary structure, homodimer.

It is found in the cytoplasm. The catalysed reaction is pseudouridine(1915) in 23S rRNA + S-adenosyl-L-methionine = N(3)-methylpseudouridine(1915) in 23S rRNA + S-adenosyl-L-homocysteine + H(+). Specifically methylates the pseudouridine at position 1915 (m3Psi1915) in 23S rRNA. This chain is Ribosomal RNA large subunit methyltransferase H, found in Deinococcus deserti (strain DSM 17065 / CIP 109153 / LMG 22923 / VCD115).